Here is a 221-residue protein sequence, read N- to C-terminus: PKHD-type hydroxylase NATL1_16191 (221 aa).

A Fe2OG dioxygenase domain is found at 80 to 174 (LIHGVMFTQS…RHVCVGWIQS (95 aa)). Fe cation is bound by residues His98, Asp100, and His155. Arg165 is a binding site for 2-oxoglutarate.

Requires Fe(2+) as cofactor. The cofactor is L-ascorbate.

This chain is PKHD-type hydroxylase NATL1_16191, found in Prochlorococcus marinus (strain NATL1A).